Reading from the N-terminus, the 281-residue chain is Release factor glutamine methyltransferase (281 aa).

S-adenosyl-L-methionine contacts are provided by residues 121–125, Asp144, and Asn188; that span reads GSGTG. 188–191 is a binding site for substrate; sequence NPPY.

It belongs to the protein N5-glutamine methyltransferase family. PrmC subfamily.

The catalysed reaction is L-glutaminyl-[peptide chain release factor] + S-adenosyl-L-methionine = N(5)-methyl-L-glutaminyl-[peptide chain release factor] + S-adenosyl-L-homocysteine + H(+). Functionally, methylates the class 1 translation termination release factors RF1/PrfA and RF2/PrfB on the glutamine residue of the universally conserved GGQ motif. The chain is Release factor glutamine methyltransferase from Aquifex aeolicus (strain VF5).